The following is a 101-amino-acid chain: Small ribosomal subunit protein uS14 (101 aa).

Belongs to the universal ribosomal protein uS14 family. As to quaternary structure, part of the 30S ribosomal subunit. Contacts proteins S3 and S10.

Functionally, binds 16S rRNA, required for the assembly of 30S particles and may also be responsible for determining the conformation of the 16S rRNA at the A site. The polypeptide is Small ribosomal subunit protein uS14 (Opitutus terrae (strain DSM 11246 / JCM 15787 / PB90-1)).